The sequence spans 1060 residues: Carbamoyl phosphate synthase large chain (1060 aa).

Residues methionine 1–glutamate 401 are carboxyphosphate synthetic domain. ATP-binding residues include arginine 129, arginine 169, glycine 175, glycine 176, arginine 208, isoleucine 210, glutamate 215, glycine 241, valine 242, histidine 243, glutamine 284, and glutamate 298. An ATP-grasp 1 domain is found at lysine 133–valine 327. Mg(2+) is bound by residues glutamine 284, glutamate 298, and asparagine 300. Residues glutamine 284, glutamate 298, and asparagine 300 each coordinate Mn(2+). An oligomerization domain region spans residues valine 402 to serine 546. Residues valine 547–glycine 929 are carbamoyl phosphate synthetic domain. In terms of domain architecture, ATP-grasp 2 spans aspartate 671–leucine 861. The ATP site is built by arginine 707, histidine 746, leucine 748, glutamate 752, glycine 777, isoleucine 778, histidine 779, serine 780, glutamine 820, and glutamate 832. The Mg(2+) site is built by glutamine 820, glutamate 832, and asparagine 834. The Mn(2+) site is built by glutamine 820, glutamate 832, and asparagine 834. Positions methionine 930–serine 1060 constitute an MGS-like domain. Residues methionine 930–serine 1060 are allosteric domain.

It belongs to the CarB family. In terms of assembly, composed of two chains; the small (or glutamine) chain promotes the hydrolysis of glutamine to ammonia, which is used by the large (or ammonia) chain to synthesize carbamoyl phosphate. Tetramer of heterodimers (alpha,beta)4. Mg(2+) is required as a cofactor. The cofactor is Mn(2+).

It catalyses the reaction hydrogencarbonate + L-glutamine + 2 ATP + H2O = carbamoyl phosphate + L-glutamate + 2 ADP + phosphate + 2 H(+). The enzyme catalyses hydrogencarbonate + NH4(+) + 2 ATP = carbamoyl phosphate + 2 ADP + phosphate + 2 H(+). The protein operates within amino-acid biosynthesis; L-arginine biosynthesis; carbamoyl phosphate from bicarbonate: step 1/1. Its pathway is pyrimidine metabolism; UMP biosynthesis via de novo pathway; (S)-dihydroorotate from bicarbonate: step 1/3. Functionally, large subunit of the glutamine-dependent carbamoyl phosphate synthetase (CPSase). CPSase catalyzes the formation of carbamoyl phosphate from the ammonia moiety of glutamine, carbonate, and phosphate donated by ATP, constituting the first step of 2 biosynthetic pathways, one leading to arginine and/or urea and the other to pyrimidine nucleotides. The large subunit (synthetase) binds the substrates ammonia (free or transferred from glutamine from the small subunit), hydrogencarbonate and ATP and carries out an ATP-coupled ligase reaction, activating hydrogencarbonate by forming carboxy phosphate which reacts with ammonia to form carbamoyl phosphate. This is Carbamoyl phosphate synthase large chain from Lacticaseibacillus paracasei (strain ATCC 334 / BCRC 17002 / CCUG 31169 / CIP 107868 / KCTC 3260 / NRRL B-441) (Lactobacillus paracasei).